The chain runs to 248 residues: 1-(5-phosphoribosyl)-5-[(5-phosphoribosylamino)methylideneamino] imidazole-4-carboxamide isomerase (248 aa).

Asp8 functions as the Proton acceptor in the catalytic mechanism. Residue Asp129 is the Proton donor of the active site.

Belongs to the HisA/HisF family.

It is found in the cytoplasm. The catalysed reaction is 1-(5-phospho-beta-D-ribosyl)-5-[(5-phospho-beta-D-ribosylamino)methylideneamino]imidazole-4-carboxamide = 5-[(5-phospho-1-deoxy-D-ribulos-1-ylimino)methylamino]-1-(5-phospho-beta-D-ribosyl)imidazole-4-carboxamide. It functions in the pathway amino-acid biosynthesis; L-histidine biosynthesis; L-histidine from 5-phospho-alpha-D-ribose 1-diphosphate: step 4/9. This Rhizobium etli (strain ATCC 51251 / DSM 11541 / JCM 21823 / NBRC 15573 / CFN 42) protein is 1-(5-phosphoribosyl)-5-[(5-phosphoribosylamino)methylideneamino] imidazole-4-carboxamide isomerase.